Consider the following 941-residue polypeptide: Gamma-aminobutyric acid type B receptor subunit 2 (941 aa).

Residues 1–41 (MASPRSSGQPGPPPPPPPPPARLLLLLLLPLLLPLAPGAWG) form the signal peptide. Topologically, residues 42–483 (WARGAPRPPP…LRKISLPLYS (442 aa)) are extracellular. An N-linked (GlcNAc...) asparagine glycan is attached at N90. Intrachain disulfides connect C108-C135, C237-C266, and C265-C302. N-linked (GlcNAc...) asparagine glycans are attached at residues N298, N389, N404, and N453. A helical transmembrane segment spans residues 484–504 (ILSALTILGMIMASAFLFFNI). Topologically, residues 505–522 (KNRNQKLIKMSSPYMNNL) are cytoplasmic. Residues 523-543 (IILGGMLSYASIFLFGLDGSF) form a helical membrane-spanning segment. Over 544–551 (VSEKTFET) the chain is Extracellular. Residues 552–572 (LCTVRTWILTVGYTTAFGAMF) form a helical membrane-spanning segment. Over 573–597 (AKTWRVHAIFKNVKMKKKIIKDQKL) the chain is Cytoplasmic. A helical membrane pass occupies residues 598–618 (LVIVGGMLLIDLCILICWQAV). Residues 619–654 (DPLRRTVEKYSMEPDPAGRDISIRPLLEHCENTHMT) are Extracellular-facing. The helical transmembrane segment at 655–675 (IWLGIVYAYKGLLMLFGCFLA) threads the bilayer. Residues 676-691 (WETRNVSIPALNDSKY) are Cytoplasmic-facing. The helical transmembrane segment at 692–712 (IGMSVYNVGIMCIIGAAVSFL) threads the bilayer. Residues 713-720 (TRDQPNVQ) lie on the Extracellular side of the membrane. The chain crosses the membrane as a helical span at residues 721–741 (FCIVALVIIFCSTITLCLVFV). The Cytoplasmic segment spans residues 742–941 (PKLITLRTNP…PSFRVMVSGL (200 aa)). A disordered region spans residues 763–790 (TQNQKKEDSKTSTSVTSVNQASTSRLEG). Residues 773-787 (TSTSVTSVNQASTSR) are compositionally biased toward polar residues. Phosphoserine is present on residues S776 and S779. A coiled-coil region spans residues 781-819 (NQASTSRLEGLQSENHRLRMKITELDKDLEEVTMQLQDT). Phosphothreonine is present on T819. 6 positions are modified to phosphoserine: S884, S893, S913, S916, S920, and S924.

This sequence belongs to the G-protein coupled receptor 3 family. GABA-B receptor subfamily. As to quaternary structure, heterodimer of GABBR1 and GABBR2. Homodimers may form, but are inactive. Interacts (via C-terminus) with ATF4 (via leucine zipper domain). In terms of tissue distribution, highly expressed in brain, especially in cerebral cortex, thalamus, hippocampus, frontal, occipital and temporal lobe, occipital pole and cerebellum, followed by corpus callosum, caudate nucleus, spinal cord, amygdala and medulla. Weakly expressed in heart, testis and skeletal muscle.

The protein resides in the cell membrane. Its subcellular location is the postsynaptic cell membrane. Component of a heterodimeric G-protein coupled receptor for GABA, formed by GABBR1 and GABBR2. Within the heterodimeric GABA receptor, only GABBR1 seems to bind agonists, while GABBR2 mediates coupling to G proteins. Ligand binding causes a conformation change that triggers signaling via guanine nucleotide-binding proteins (G proteins) and modulates the activity of down-stream effectors, such as adenylate cyclase. Signaling inhibits adenylate cyclase, stimulates phospholipase A2, activates potassium channels, inactivates voltage-dependent calcium-channels and modulates inositol phospholipid hydrolysis. Plays a critical role in the fine-tuning of inhibitory synaptic transmission. Pre-synaptic GABA receptor inhibits neurotransmitter release by down-regulating high-voltage activated calcium channels, whereas postsynaptic GABA receptor decreases neuronal excitability by activating a prominent inwardly rectifying potassium (Kir) conductance that underlies the late inhibitory postsynaptic potentials. Not only implicated in synaptic inhibition but also in hippocampal long-term potentiation, slow wave sleep, muscle relaxation and antinociception. The chain is Gamma-aminobutyric acid type B receptor subunit 2 (GABBR2) from Homo sapiens (Human).